The following is a 619-amino-acid chain: Dihydroxy-acid dehydratase (619 aa).

D81 serves as a coordination point for Mg(2+). C122 contacts [2Fe-2S] cluster. Mg(2+) contacts are provided by D123 and K124. The residue at position 124 (K124) is an N6-carboxylysine. C195 is a [2Fe-2S] cluster binding site. Mg(2+) is bound at residue E494. The active-site Proton acceptor is the S520.

It belongs to the IlvD/Edd family. As to quaternary structure, homodimer. The cofactor is [2Fe-2S] cluster. Mg(2+) is required as a cofactor.

The enzyme catalyses (2R)-2,3-dihydroxy-3-methylbutanoate = 3-methyl-2-oxobutanoate + H2O. The catalysed reaction is (2R,3R)-2,3-dihydroxy-3-methylpentanoate = (S)-3-methyl-2-oxopentanoate + H2O. It participates in amino-acid biosynthesis; L-isoleucine biosynthesis; L-isoleucine from 2-oxobutanoate: step 3/4. It functions in the pathway amino-acid biosynthesis; L-valine biosynthesis; L-valine from pyruvate: step 3/4. Functions in the biosynthesis of branched-chain amino acids. Catalyzes the dehydration of (2R,3R)-2,3-dihydroxy-3-methylpentanoate (2,3-dihydroxy-3-methylvalerate) into 2-oxo-3-methylpentanoate (2-oxo-3-methylvalerate) and of (2R)-2,3-dihydroxy-3-methylbutanoate (2,3-dihydroxyisovalerate) into 2-oxo-3-methylbutanoate (2-oxoisovalerate), the penultimate precursor to L-isoleucine and L-valine, respectively. The sequence is that of Dihydroxy-acid dehydratase from Shewanella sp. (strain MR-4).